The chain runs to 77 residues: Early E3 9.0 kDa glycoprotein (77 aa).

Asn-7 carries N-linked (GlcNAc...) asparagine; by host glycosylation. A helical transmembrane segment spans residues Ile-27 to Cys-47.

Belongs to the adenoviridae E3A-1 family.

It is found in the host nucleus membrane. In Human adenovirus B serotype 3 (HAdV-3), this protein is Early E3 9.0 kDa glycoprotein.